The chain runs to 483 residues: Acetyl-coenzyme A carboxylase carboxyl transferase subunit beta, chloroplastic (483 aa).

A CoA carboxyltransferase N-terminal domain is found at 219 to 483 (LWVQCENCYG…LHTFFPLNQN (265 aa)). The Zn(2+) site is built by C223, C226, C242, and C245. The C4-type zinc-finger motif lies at 223 to 245 (CENCYGLNYKKFFKSKMNLCEQC).

This sequence belongs to the AccD/PCCB family. Acetyl-CoA carboxylase is a heterohexamer composed of biotin carboxyl carrier protein, biotin carboxylase and 2 subunits each of ACCase subunit alpha and ACCase plastid-coded subunit beta (accD). Zn(2+) serves as cofactor.

The protein localises to the plastid. It is found in the chloroplast stroma. The enzyme catalyses N(6)-carboxybiotinyl-L-lysyl-[protein] + acetyl-CoA = N(6)-biotinyl-L-lysyl-[protein] + malonyl-CoA. The protein operates within lipid metabolism; malonyl-CoA biosynthesis; malonyl-CoA from acetyl-CoA: step 1/1. Its function is as follows. Component of the acetyl coenzyme A carboxylase (ACC) complex. Biotin carboxylase (BC) catalyzes the carboxylation of biotin on its carrier protein (BCCP) and then the CO(2) group is transferred by the transcarboxylase to acetyl-CoA to form malonyl-CoA. The sequence is that of Acetyl-coenzyme A carboxylase carboxyl transferase subunit beta, chloroplastic from Guizotia abyssinica (Niger).